The chain runs to 409 residues: Putative lipoate-protein ligase A (409 aa).

Residues 146-330 (GPDNCRLVFY…RFQKTFKVDG (185 aa)) form the BPL/LPL catalytic domain. ATP-binding positions include Arg-188, 193 to 196 (GTVL), and Lys-249. Position 249 (Lys-249) interacts with (R)-lipoate.

It belongs to the LplA family. In terms of assembly, monomer.

The catalysed reaction is L-lysyl-[lipoyl-carrier protein] + (R)-lipoate + ATP = N(6)-[(R)-lipoyl]-L-lysyl-[lipoyl-carrier protein] + AMP + diphosphate + H(+). It functions in the pathway protein modification; protein lipoylation via exogenous pathway; protein N(6)-(lipoyl)lysine from lipoate: step 1/2. Its pathway is protein modification; protein lipoylation via exogenous pathway; protein N(6)-(lipoyl)lysine from lipoate: step 2/2. Its function is as follows. Catalyzes both the ATP-dependent activation of exogenously supplied lipoate to lipoyl-AMP and the transfer of the activated lipoyl onto the lipoyl domains of lipoate-dependent enzymes. The chain is Putative lipoate-protein ligase A (AIM22) from Saccharomyces cerevisiae (strain YJM789) (Baker's yeast).